The sequence spans 280 residues: Protease HtpX (280 aa).

A run of 2 helical transmembrane segments spans residues 7 to 26 and 30 to 49; these read TFIL…GLLG and GMLI…YWYS. A Zn(2+)-binding site is contributed by His-129. Residue Glu-130 is part of the active site. His-133 contacts Zn(2+). The next 2 membrane-spanning stretches (helical) occupy residues 146–166 and 178–198; these read ATIA…SMFG and VVGM…QMAI. Glu-203 contributes to the Zn(2+) binding site.

Belongs to the peptidase M48B family. Zn(2+) serves as cofactor.

The protein resides in the cell inner membrane. This chain is Protease HtpX, found in Legionella pneumophila subsp. pneumophila (strain Philadelphia 1 / ATCC 33152 / DSM 7513).